Reading from the N-terminus, the 161-residue chain is Large ribosomal subunit protein bL17 (161 aa).

The tract at residues 126 to 161 is disordered; that stretch reads TAAKKAPKTRRSRKKATASVAEAPTAEAASEEKAAE. The segment covering 130-141 has biased composition (basic residues); that stretch reads KAPKTRRSRKKA. The segment covering 142–153 has biased composition (low complexity); the sequence is TASVAEAPTAEA.

Belongs to the bacterial ribosomal protein bL17 family. Part of the 50S ribosomal subunit. Contacts protein L32.

In Parabacteroides distasonis (strain ATCC 8503 / DSM 20701 / CIP 104284 / JCM 5825 / NCTC 11152), this protein is Large ribosomal subunit protein bL17.